We begin with the raw amino-acid sequence, 93 residues long: Phosphoribosyl-ATP pyrophosphatase (93 aa).

The protein belongs to the PRA-PH family.

It localises to the cytoplasm. The catalysed reaction is 1-(5-phospho-beta-D-ribosyl)-ATP + H2O = 1-(5-phospho-beta-D-ribosyl)-5'-AMP + diphosphate + H(+). It functions in the pathway amino-acid biosynthesis; L-histidine biosynthesis; L-histidine from 5-phospho-alpha-D-ribose 1-diphosphate: step 2/9. This chain is Phosphoribosyl-ATP pyrophosphatase, found in Mycolicibacterium gilvum (strain PYR-GCK) (Mycobacterium gilvum (strain PYR-GCK)).